A 362-amino-acid chain; its full sequence is Outer membrane porin F (362 aa).

Residues 1-22 (MMKRNILAVIVPALLVAGTANA) form the signal peptide.

This sequence belongs to the Gram-negative porin family. In terms of assembly, homotrimer. Forms mixed heterotrimers with OmpC; other mixed heterotrimers are also probable.

Its subcellular location is the cell outer membrane. In terms of biological role, forms pores that allow passive diffusion of small molecules across the outer membrane. (Microbial infection) Is the major receptor for colicin E5. Its function is as follows. (Microbial infection) A mixed OmpC-OmpF heterotrimer is the outer membrane receptor for toxin CdiA-EC536. The chain is Outer membrane porin F (ompF) from Escherichia coli O6:K15:H31 (strain 536 / UPEC).